Here is a 212-residue protein sequence, read N- to C-terminus: Redox-sensing transcriptional repressor Rex (212 aa).

Positions 17 to 56 form a DNA-binding region, H-T-H motif; it reads KYHRYLQELMENDVDRISSKELSEKIGFTASQIRQDLNCF. 91–96 contacts NAD(+); the sequence is GAGNIG.

This sequence belongs to the transcriptional regulatory Rex family. Homodimer.

The protein localises to the cytoplasm. Its function is as follows. Modulates transcription in response to changes in cellular NADH/NAD(+) redox state. This is Redox-sensing transcriptional repressor Rex from Clostridium perfringens (strain ATCC 13124 / DSM 756 / JCM 1290 / NCIMB 6125 / NCTC 8237 / Type A).